The following is a 254-amino-acid chain: Allene oxide cyclase 4, chloroplastic (254 aa).

A chloroplast-targeting transit peptide spans 1–52 (MIMASSAAASISMITLRNLSRNHQSHQSTFLGFSRSFHNQRISSNSPGLSTR).

Belongs to the allene oxide cyclase family. In terms of tissue distribution, highly expressed in fully developed leaves.

It localises to the plastid. Its subcellular location is the chloroplast. The catalysed reaction is (9Z,13S,15Z)-12,13-epoxyoctadeca-9,11,15-trienoate = (9S,13S,15Z)-12-oxophyto-10,15-dienoate. Involved in the production of 12-oxo-phytodienoic acid (OPDA), a precursor of jasmonic acid. This Arabidopsis thaliana (Mouse-ear cress) protein is Allene oxide cyclase 4, chloroplastic (AOC4).